We begin with the raw amino-acid sequence, 311 residues long: MSTPGAQEVLFRTGIAAVNSTNHLRVYFQDSHGSIRESLYESGWANGTAKNVIAKAKLGTPLAATSKELKNIRVYSLTEDNVLQEAAYDSGSGWYNGALAGAKFTVAPYSRIGSVFLAGTNALQLRIYAQKTDNTIQEYMWNGDGWKEGTNLGVALPGTGIGVTCWRYTDYDGPSIRVWFQTDNLKLVQRAYDPHTGWYKELTTIFDKAPPRCAIAATNFNPGKSSIYMRIYFVNSDNTIWQVCWDHGQGYHDKRTITPVIQGSEIAIISWEGPELRLYFQNGTYVSAISEWTWGKAHGSQLGRRALPPAE.

A run of 6 repeats spans residues M1 to I53, A54 to K103, F104 to N151, L152 to A209, P210 to T256, and I257 to E311. The segment at M1 to E311 is 6 X approximate tandem repeats. Beta-L-fucose-binding residues include R25, E37, W44, R73, E85, W94, R126, E138, W146, R177, Q189, W198, R230, Q242, R277, and E291.

Belongs to the fungal fucose-specific lectin family. In terms of assembly, homodimer.

In terms of biological role, lectin that specifically binds to L-fucose and weakly reacts with mannose and N-acetyl-neuraminic acid. Has strongest preference for the alpha-1,6-fucosylated chain (core fucose) on glycoproteins among alpha-1,2-, alpha-1,3-, alpha-1,4-, and alpha-1,6-fucosylated chains. Binds to fucose residues of IgE in mice and human, causing antigen-independent IgE-mediated mast cell activation and anaphylactoid reactions in mice and is possibly implicated in allergic response to Aspergillus oryzae in humans. Induces secretion of pro-inflammatory cytokines IL6 and IL8 implicated in ocular diseases such as mycotic keratitis, probably through its interaction with host toll-like receptors TLR2 and TLR4, followed by up-regulation of pro-inflammatory cytokines. This Aspergillus oryzae (strain ATCC 42149 / RIB 40) (Yellow koji mold) protein is Fucose-specific lectin.